The chain runs to 72 residues: Translation initiation factor IF-1 (72 aa).

The S1-like domain maps to 1 to 72; that stretch reads MAKDDVIEVD…DKGRITFRYK (72 aa).

The protein belongs to the IF-1 family. In terms of assembly, component of the 30S ribosomal translation pre-initiation complex which assembles on the 30S ribosome in the order IF-2 and IF-3, IF-1 and N-formylmethionyl-tRNA(fMet); mRNA recruitment can occur at any time during PIC assembly.

The protein localises to the cytoplasm. In terms of biological role, one of the essential components for the initiation of protein synthesis. Stabilizes the binding of IF-2 and IF-3 on the 30S subunit to which N-formylmethionyl-tRNA(fMet) subsequently binds. Helps modulate mRNA selection, yielding the 30S pre-initiation complex (PIC). Upon addition of the 50S ribosomal subunit IF-1, IF-2 and IF-3 are released leaving the mature 70S translation initiation complex. This is Translation initiation factor IF-1 from Wolinella succinogenes (strain ATCC 29543 / DSM 1740 / CCUG 13145 / JCM 31913 / LMG 7466 / NCTC 11488 / FDC 602W) (Vibrio succinogenes).